The sequence spans 389 residues: Chalcone synthase (389 aa).

The active site involves cysteine 164.

The protein belongs to the thiolase-like superfamily. Chalcone/stilbene synthases family.

The catalysed reaction is (E)-4-coumaroyl-CoA + 3 malonyl-CoA + 3 H(+) = 2',4,4',6'-tetrahydroxychalcone + 3 CO2 + 4 CoA. It functions in the pathway secondary metabolite biosynthesis; flavonoid biosynthesis. The primary product of this enzyme is 4,2',4',6'-tetrahydroxychalcone (also termed naringenin-chalcone or chalcone) which can under specific conditions spontaneously isomerize into naringenin. The polypeptide is Chalcone synthase (CHS1) (Casuarina glauca (Swamp oak)).